Reading from the N-terminus, the 188-residue chain is Large ribosomal subunit protein eL18 (188 aa).

The segment at 153–188 (GKAPGTPHSHTKPYVRSKGRKFERARGRRASCGYKN) is disordered. Basic residues predominate over residues 161-171 (SHTKPYVRSKG).

The protein belongs to the eukaryotic ribosomal protein eL18 family. In terms of assembly, component of the large ribosomal subunit.

The protein resides in the cytoplasm. It is found in the cytosol. The protein localises to the rough endoplasmic reticulum. Its function is as follows. Component of the large ribosomal subunit. The ribosome is a large ribonucleoprotein complex responsible for the synthesis of proteins in the cell. In Oreochromis mossambicus (Mozambique tilapia), this protein is Large ribosomal subunit protein eL18 (rpl18).